A 60-amino-acid chain; its full sequence is Large ribosomal subunit protein bL32 (60 aa).

A disordered region spans residues 1-43; that stretch reads MAVQQNRKTRSRRGMRRSHDALTGKTLSVDSTTGEKHLRHHVT. The segment covering 7–16 has biased composition (basic residues); it reads RKTRSRRGMR.

Belongs to the bacterial ribosomal protein bL32 family.

This chain is Large ribosomal subunit protein bL32, found in Saccharophagus degradans (strain 2-40 / ATCC 43961 / DSM 17024).